The following is a 555-amino-acid chain: Putative polyketide hydroxylase (555 aa).

FAD contacts are provided by residues 16-45 (PVLV…LVER) and 303-313 (YRAGRVFLAGD). The interval 366–395 (ATTARAAARSAEHSHPGFAPPPGTSGGPQG) is disordered.

It belongs to the PheA/TfdB FAD monooxygenase family. FAD is required as a cofactor.

In terms of biological role, involved in developmentally regulated synthesis of a compound biosynthetically related to polyketide antibiotics which is essential for spore color in Streptomyces halstedii. This Streptomyces halstedii protein is Putative polyketide hydroxylase (schC).